A 157-amino-acid polypeptide reads, in one-letter code: MSYNITNSNQYQYFAAVWAEPTPMLNQCVSALSQSYQTQAGRDTVRQQFANLLSTIVAPNQRFPDTGFRVYVNSAVIKPLYEALMKSFDTRNRIIETEEESRPSASEVANATQRVDDATVAIRSQIQLLLNELSNGHGYMNRAEFEAILPWTTAPAT.

S2 is subject to N-acetylserine; by host.

Belongs to the virgaviridae capsid protein family.

It is found in the virion. In terms of biological role, capsid protein self-assembles to form rod-shaped virions about 18 nm in diameter with a central canal enclosing the viral genomic RNA. The chain is Capsid protein (CP) from Digitalis lanata (Grecian foxglove).